Consider the following 540-residue polypeptide: Acrosin-binding protein (540 aa).

A signal peptide spans 1-24; the sequence is MKLAASFLLMLLEVLLLPETPLSA. Positions 25 to 104 are pro-ACR binding; it reads EEALASTPGS…ASWFESFCQF (80 aa). Residues 25 to 272 constitute a propeptide, removed in mature form; that stretch reads EEALASTPGS…NPSFFTPRVR (248 aa). The segment at 181–266 is disordered; sequence SLSLGGKEQQ…SKSLSSNPSF (86 aa). A compositionally biased stretch (basic and acidic residues) spans 195–213; the sequence is LGLEQQHKQEQIQEHKLEE. Residues 214 to 241 show a composition bias toward acidic residues; it reads AQEQEEQEEEEEEEEAKQEEGQGTEEGL. Polar residues predominate over residues 256 to 266; that stretch reads QSKSLSSNPSF. The tract at residues 316 to 424 is pro-ACR binding; sequence LPHTETLMVL…NQAKIPEKGR (109 aa).

In terms of assembly, binds pro-ACR. Does not bind the mature form of ACR. Binds pro-ACR. Does not bind mature form of ACR. Post-translationally, the N-terminus is blocked. Phosphorylated on Tyr residues in capacitated sperm. In terms of processing, synthesized as a 60-kDa precursor, the 32-kDa mature form is post-translationally produced by the removal of the N-terminal half of the precursor during sperm maturation in the testis and/or epididymis.

Its subcellular location is the cytoplasmic vesicle. It is found in the secretory vesicle. The protein localises to the acrosome. Functionally, acrosomal protein that maintains proacrosin (pro-ACR) as an enzymatically inactive zymogen in the acrosome. Involved also in the acrosome formation. In terms of biological role, maintains pro-ACR as an enzymatically inactive zymogen in the acrosome until acrosomal exocytosis. Partially also contributes to the assembly of acrosomal proteins to form an acrosomal granule. Its function is as follows. Rodent specific isoform that participates in the formation of the acrosomal granule into the center of the acrosomal vesicle during early spermiogenesis. In the fertilization process promotes ACR release from the acrosome during acrosomal exocytosis. The chain is Acrosin-binding protein from Rattus norvegicus (Rat).